A 410-amino-acid polypeptide reads, in one-letter code: Metal tolerance protein 3 (410 aa).

A disordered region spans residues 1-58; sequence MDGDDRRTPLLGGEGGSTRPPSLRRRDSARSLRSTFLSRLPDKVRGGGDPERPAADVD. Residues 1-114 are Cytoplasmic-facing; sequence MDGDDRRTPL…EDKEQKQSES (114 aa). A compositionally biased stretch (basic and acidic residues) spans 40–58; sequence LPDKVRGGGDPERPAADVD. Residues 115-135 form a helical membrane-spanning segment; it reads AMKISNYANIILLVFKVYATI. At 136–140 the chain is on the vacuolar side; that stretch reads KTGSM. Residues 141–161 traverse the membrane as a helical segment; the sequence is AIAASTLDSLLDFLAGGILYF. Over 162 to 184 the chain is Cytoplasmic; sequence THLTMKSVNIYKYPIGKLRVQPV. A helical membrane pass occupies residues 185–205; sequence GIIVFAAIMATLGFQVLIQAI. At 206-221 the chain is on the vacuolar side; that stretch reads EQLVENKAGEKMTPEQ. A helical membrane pass occupies residues 222–242; that stretch reads LIWLYSIMLSATVVKLALYIY. The Cytoplasmic portion of the chain corresponds to 243-258; that stretch reads CRSSGNSIVQAYAKDH. A helical membrane pass occupies residues 259-275; the sequence is YFDVVTNVVGLVAAVLG. Over 276 to 284 the chain is Vacuolar; the sequence is DKFFWWIDP. Residues 285-303 form a helical membrane-spanning segment; it reads VGAVLLAVYTIVNWSGTVY. At 304–410 the chain is on the cytoplasmic side; it reads ENAVTLVGQC…VRSRLPSTEP (107 aa).

The protein belongs to the cation diffusion facilitator (CDF) transporter (TC 2.A.4) family. SLC30A subfamily.

The protein localises to the vacuole membrane. Its function is as follows. Involved in sequestration of excess metal in the cytoplasm into vacuoles to maintain metal homeostasis. The polypeptide is Metal tolerance protein 3 (MTP3) (Oryza sativa subsp. japonica (Rice)).